We begin with the raw amino-acid sequence, 468 residues long: 6-phospho-beta-galactosidase (468 aa).

D-galactose 6-phosphate-binding residues include glutamine 19, histidine 116, asparagine 159, glutamate 160, and asparagine 297. Catalysis depends on glutamate 160, which acts as the Proton donor. Glutamate 375 functions as the Nucleophile in the catalytic mechanism. D-galactose 6-phosphate is bound by residues serine 428, tryptophan 429, lysine 435, and tyrosine 437.

This sequence belongs to the glycosyl hydrolase 1 family.

It carries out the reaction a 6-phospho-beta-D-galactoside + H2O = D-galactose 6-phosphate + an alcohol. It participates in carbohydrate metabolism; lactose degradation; D-galactose 6-phosphate and beta-D-glucose from lactose 6-phosphate: step 1/1. In Streptococcus pyogenes serotype M12 (strain MGAS2096), this protein is 6-phospho-beta-galactosidase.